The following is an 815-amino-acid chain: 1,4-alpha-glucan branching enzyme GlgB (815 aa).

Asp405 acts as the Nucleophile in catalysis. Residue Glu458 is the Proton donor of the active site.

This sequence belongs to the glycosyl hydrolase 13 family. GlgB subfamily. As to quaternary structure, monomer.

It carries out the reaction Transfers a segment of a (1-&gt;4)-alpha-D-glucan chain to a primary hydroxy group in a similar glucan chain.. Its pathway is glycan biosynthesis; glycogen biosynthesis. Its function is as follows. Catalyzes the formation of the alpha-1,6-glucosidic linkages in glycogen by scission of a 1,4-alpha-linked oligosaccharide from growing alpha-1,4-glucan chains and the subsequent attachment of the oligosaccharide to the alpha-1,6 position. This chain is 1,4-alpha-glucan branching enzyme GlgB, found in Histophilus somni (strain 2336) (Haemophilus somnus).